Reading from the N-terminus, the 723-residue chain is Hypoxia-inducible factor prolyl hydroxylase (723 aa).

Zn(2+)-binding residues include Cys39, Cys42, Cys54, Cys57, Cys63, His67, His75, and Cys79. An MYND-type; atypical zinc finger spans residues Cys39–Cys79. The span at Pro249–Ser270 shows a compositional bias: low complexity. Disordered regions lie at residues Pro249–Thr275 and Ile294–Tyr323. The 99-residue stretch at Gly468–Asp566 folds into the Fe2OG dioxygenase domain. 3 residues coordinate Fe cation: His487, Asp489, and His548. Arg557 provides a ligand contact to 2-oxoglutarate. A disordered region spans residues Arg678–Ile723. Residues Asp687 to Ser699 show a composition bias toward basic and acidic residues.

In terms of assembly, interacts (via catalytic domain) with lin-10 (via N-terminus); the interaction regulates lin-10 subcellular localization; the interaction is direct. Interacts (via catalytic domain) with swan-1 (via WD 1-3 repeats); the interaction may regulate vhl-1-independent hif-1 transcriptional activity; the interaction is direct. Interacts (via C-terminus) with cysl-1; the interaction is enhanced by hydrogen disulfide and activates hif-1-mediated transcription; the interaction is direct. It depends on Fe(2+) as a cofactor. The cofactor is L-ascorbate. As to expression, in larvae and adults, expressed in pharyngeal and body wall muscles.

It localises to the cytoplasm. The protein resides in the nucleus. Its subcellular location is the cell projection. It is found in the dendrite. The protein localises to the axon. It catalyses the reaction L-prolyl-[hypoxia-inducible factor alpha subunit] + 2-oxoglutarate + O2 = trans-4-hydroxy-L-prolyl-[hypoxia-inducible factor alpha subunit] + succinate + CO2. Inhibited by Co(2+) and dimethyloxalylglycine. Inhibited by the iron chelator 2, 2'-dipyridyl. Its function is as follows. Cellular oxygen sensor which regulates the stability and the activity of hypoxia-inducible transcription factor, hif-1. In normoxic conditions, hydroxylates hif-1 targeting it for vhl-1-mediated proteasomal degradation. In addition, regulates hif-1 transcriptional activity in a vhl-1-independent manner and independently of its hydroxylase activity. By regulating hif-1 activity, controls several cellular responses. Mediates susceptibility to B.thuringiensis and V.cholerae pore-forming toxins and enteropathogenic E.coli. Mediates susceptibility to P.aeruginosa PAO1-mediated killing by regulating resistance to cyanide produced by P.aeruginosa. Mediates resistance to S.aureus-mediated killing. In addition, plays a role in heat acclimation, neuronal development, behavioral responses to reoxygenation and hydrogen sulfide, iron homeostasis and aging. In neurons, involved in mitochondrion fusion during reoxygenation. Involved in egg laying. Functionally, regulates the trafficking of the glutamate receptor glr-1, probably independently of hif-1, by regulating lin-10 subcellular localization in response to oxygen levels. May hydroxylate lin-10. This Caenorhabditis elegans protein is Hypoxia-inducible factor prolyl hydroxylase.